The primary structure comprises 218 residues: Monomethylamine corrinoid protein 1 (218 aa).

Residues 1–91 (MANQEIFDKL…ELEKTKVEGE (91 aa)) form the B12-binding N-terminal domain. Residues 94–218 (TGLAITFVAE…AAKVALNIMK (125 aa)) enclose the B12-binding domain. A methylcob(III)alamin-binding site is contributed by histidine 107.

It belongs to the methylamine corrinoid protein family. In terms of assembly, can form a complex with MtmB.

The protein operates within one-carbon metabolism; methanogenesis from methylamine. In terms of biological role, acts as a methyl group carrier between MtmB and MtbA. The chain is Monomethylamine corrinoid protein 1 (mtmC1) from Methanosarcina acetivorans (strain ATCC 35395 / DSM 2834 / JCM 12185 / C2A).